The chain runs to 448 residues: Clusterin (448 aa).

A signal peptide spans 1–21 (MKILLLCVALLLIWDNGMVLG). A Nuclear localization signal motif is present at residues 77–80 (KKKK). Disulfide bonds link C101–C312, C112–C304, C115–C301, C120–C294, and C128–C284. A glycan (N-linked (GlcNAc...) asparagine) is linked at N102. Position 132 is a phosphoserine (S132). Residues N144, N290, N327, N353, and N373 are each glycosylated (N-linked (GlcNAc...) asparagine). S395 carries the phosphoserine modification. The Nuclear localization signal motif lies at 442-446 (RRKSR).

Belongs to the clusterin family. In terms of assembly, antiparallel disulfide-linked heterodimer of an alpha chain and a beta chain. Self-associates and forms higher oligomers. Interacts with a broad range of misfolded proteins, including APP, APOC2 and LYZ. Slightly acidic pH promotes interaction with misfolded proteins. Forms high-molecular weight oligomers upon interaction with misfolded proteins. Interacts with APOA1, LRP2, CLUAP1 and PON1. Interacts with the complement membrane attack complex. Interacts (via alpha chain) with XRCC6. Interacts with SYVN1, COMMD1, BTRC, CUL1 and with ubiquitin and SCF (SKP1-CUL1-F-box protein) E3 ubiquitin-protein ligase complexes. Interacts (via alpha chain) with BAX in stressed cells, where BAX undergoes a conformation change leading to association with the mitochondrial membrane. Does not interact with BAX in unstressed cells. Found in a complex with LTF, CLU, EPPIN and SEMG1. Interacts (immaturely glycosylated pre-secreted form) with HSPA5; this interaction promotes CLU stability and facilitates stress-induced CLU retrotranslocation from the secretory pathway to the mitochondria, thereby reducing stress-induced apoptosis by stabilizing mitochondrial membrane integrity. Interacts with BCL2L1; this interaction releases and activates BAX and promotes cell death. Interacts with TGFBR2 and ACVR1. Interacts (secreted form) with STMN3; this interaction may act as an important modulator during neuronal differentiation. Interacts with VLDLR and LRP8. Proteolytically cleaved on its way through the secretory system, probably within the Golgi lumen. Proteolytic cleavage is not necessary for its chaperone activity. All non-secreted forms are not proteolytically cleaved. Chaperone activity of uncleaved forms is dependent on a non-reducing environment. Post-translationally, polyubiquitinated, leading to proteasomal degradation. Under cellular stress, the intracellular level of cleaved form is reduced due to proteasomal degradation. In terms of processing, extensively glycosylated with sulfated N-linked carbohydrates. About 30% of the protein mass is comprised of complex N-linked carbohydrate. Endoplasmic reticulum (ER) stress induces changes in glycosylation status and increases level of hypoglycosylated forms. Core carbohydrates are essential for chaperone activity. Non-secreted forms are hypoglycosylated or unglycosylated. As to expression, most abundant in stomach, liver, brain, and testis, with intermediate levels in heart, ovary and kidney.

The protein localises to the secreted. The protein resides in the nucleus. It is found in the cytoplasm. Its subcellular location is the mitochondrion membrane. It localises to the cytosol. The protein localises to the microsome. The protein resides in the endoplasmic reticulum. It is found in the mitochondrion. Its subcellular location is the perinuclear region. It localises to the cytoplasmic vesicle. The protein localises to the secretory vesicle. The protein resides in the chromaffin granule. In terms of biological role, functions as extracellular chaperone that prevents aggregation of non native proteins. Prevents stress-induced aggregation of blood plasma proteins. Inhibits formation of amyloid fibrils by APP, APOC2, B2M, CALCA, CSN3, SNCA and aggregation-prone LYZ variants (in vitro). Does not require ATP. Maintains partially unfolded proteins in a state appropriate for subsequent refolding by other chaperones, such as HSPA8/HSC70. Does not refold proteins by itself. Binding to cell surface receptors triggers internalization of the chaperone-client complex and subsequent lysosomal or proteasomal degradation. When secreted, protects cells against apoptosis and against cytolysis by complement: inhibits assembly of the complement membrane attack complex (MAC) by preventing polymerization of C9 pore component of the MAC complex. Intracellular forms interact with ubiquitin and SCF (SKP1-CUL1-F-box protein) E3 ubiquitin-protein ligase complexes and promote the ubiquitination and subsequent proteasomal degradation of target proteins. Promotes proteasomal degradation of COMMD1 and IKBKB. Modulates NF-kappa-B transcriptional activity. Following stress, promotes apoptosis. Inhibits apoptosis when associated with the mitochondrial membrane by interference with BAX-dependent release of cytochrome c into the cytoplasm. Plays a role in the regulation of cell proliferation. Following ER stress, suppresses stress-induced apoptosis by stabilizing mitochondrial membrane integrity through interaction with HSPA5. When secreted, does not affect caspase or BAX-mediated intrinsic apoptosis and TNF-induced NF-kappa-B-activity. When secreted, acts as an important modulator during neuronal differentiation through interaction with STMN3. Plays a role in the clearance of immune complexes that arise during cell injury. In Mus musculus (Mouse), this protein is Clusterin.